Consider the following 338-residue polypeptide: Ketol-acid reductoisomerase (NADP(+)) (338 aa).

The 181-residue stretch at 1-181 (MNVYYDRDCD…GGGRTGIIET (181 aa)) folds into the KARI N-terminal Rossmann domain. NADP(+) contacts are provided by residues 24–27 (YGSQ), arginine 47, serine 50, serine 52, and 82–85 (DEFQ). The active site involves histidine 107. An NADP(+)-binding site is contributed by glycine 133. The region spanning 182–327 (TFKDETETDL…GNLRAMMPWI (146 aa)) is the KARI C-terminal knotted domain. Mg(2+) is bound by residues aspartate 190, glutamate 194, glutamate 226, and glutamate 230. Serine 251 is a binding site for substrate.

Belongs to the ketol-acid reductoisomerase family. It depends on Mg(2+) as a cofactor.

The enzyme catalyses (2R)-2,3-dihydroxy-3-methylbutanoate + NADP(+) = (2S)-2-acetolactate + NADPH + H(+). The catalysed reaction is (2R,3R)-2,3-dihydroxy-3-methylpentanoate + NADP(+) = (S)-2-ethyl-2-hydroxy-3-oxobutanoate + NADPH + H(+). It participates in amino-acid biosynthesis; L-isoleucine biosynthesis; L-isoleucine from 2-oxobutanoate: step 2/4. It functions in the pathway amino-acid biosynthesis; L-valine biosynthesis; L-valine from pyruvate: step 2/4. In terms of biological role, involved in the biosynthesis of branched-chain amino acids (BCAA). Catalyzes an alkyl-migration followed by a ketol-acid reduction of (S)-2-acetolactate (S2AL) to yield (R)-2,3-dihydroxy-isovalerate. In the isomerase reaction, S2AL is rearranged via a Mg-dependent methyl migration to produce 3-hydroxy-3-methyl-2-ketobutyrate (HMKB). In the reductase reaction, this 2-ketoacid undergoes a metal-dependent reduction by NADPH to yield (R)-2,3-dihydroxy-isovalerate. The polypeptide is Ketol-acid reductoisomerase (NADP(+)) (Trichlorobacter lovleyi (strain ATCC BAA-1151 / DSM 17278 / SZ) (Geobacter lovleyi)).